Here is a 271-residue protein sequence, read N- to C-terminus: Insulin-like growth factor-binding protein 5 (271 aa).

A signal peptide spans 1–19; that stretch reads MVLTAVLLLLAACAGSAQG. Positions 22–102 constitute an IGFBP N-terminal domain; it reads SFVHCEPCDE…LHGRGVCLNE (81 aa). Disulfide bonds link Cys26-Cys52, Cys29-Cys54, Cys37-Cys55, Cys44-Cys58, Cys66-Cys79, and Cys73-Cys99. A compositionally biased stretch (basic and acidic residues) spans 109 to 121; sequence AKIERDSREHEEP. Positions 109–129 are disordered; the sequence is AKIERDSREHEEPTTSEMAEE. The residue at position 115 (Ser115) is a Phosphoserine. In terms of domain architecture, Thyroglobulin type-1 spans 188–262; that stretch reads QGPCRRHMEA…MEYVDGDFQC (75 aa). Intrachain disulfides connect Cys191–Cys218, Cys229–Cys240, and Cys242–Cys262.

As to quaternary structure, interacts with IGF1; this interaction enhances the growth stimulatory effects of IGF1 on fibroblasts. Interacts with CAV1; this interaction allows trafficking of IGFBP5 from the plasma membrane to the nucleus. Interacts with NCL; this interaction is necessary for IGFBP5 localization to the nucleus.

Its subcellular location is the secreted. The protein resides in the cytoplasm. It localises to the nucleus. Its function is as follows. Multifunctional protein that plays a critical role in regulating the availability of IGFs to their receptors and thereby regulates IGF-mediated cellular processes including proliferation, differentiation, and apoptosis in a cell-type specific manner. Increases the cell proliferation of osteoblasts, intestinal smooth muscle cells and neuroblastoma cells. Enhances adhesion and survival of epithelial cells but decreases adhesion of mesenchymal cells. Once secreted, acts as a major mediator of mTORC1-dependent feedback inhibition of IGF1 signaling. Also plays a role in the induction of extracellular matrix (ECM) production and deposition independently of its nuclear translocation and binding to IGFs. Acts itself as a growth factor that can act independently of IGFs to regulate bone formation. Acts as a ligand for the ROR1 receptor which triggers formation of ROR1/HER2 heterodimer to enhance CREB oncogenic signaling. This Bos taurus (Bovine) protein is Insulin-like growth factor-binding protein 5 (IGFBP5).